Here is a 116-residue protein sequence, read N- to C-terminus: Protein Rev (116 aa).

2 positions are modified to phosphoserine; by host CK2: serine 5 and serine 8. The tract at residues 18-26 (LIKFLYQSN) is homomultimerization. A disordered region spans residues 25-49 (SNPPPSLEGTRQARRNRRRRWRERQ). The short motif at 34–50 (TRQARRNRRRRWRERQR) is the Nuclear localization signal and RNA-binding (RRE) element. Positions 36-47 (QARRNRRRRWRE) are enriched in basic residues. Residues 73 to 84 (LPLPPLEKLTLD) carry the Nuclear export signal and binding to XPO1 motif. Residues serine 92 and serine 99 each carry the phosphoserine; by host modification. The segment at 92 to 116 (SGTQGVGSPQILVESPAILEPGTKE) is disordered.

It belongs to the HIV-1 REV protein family. As to quaternary structure, homomultimer; when bound to the RRE. Multimeric assembly is essential for activity and may involve XPO1. Binds to human KPNB1, XPO1, TNPO1, RANBP5 and IPO7. Interacts with the viral Integrase. Interacts with human KHDRBS1. Interacts with human NAP1; this interaction decreases Rev multimerization and stimulates its activity. Interacts with human DEAD-box helicases DDX3 and DDX24; these interactions may serve for viral RNA export to the cytoplasm and packaging, respectively. Interacts with human PSIP1; this interaction may inhibit HIV-1 DNA integration by promoting dissociation of the Integrase-LEDGF/p75 complex. In terms of processing, asymmetrically arginine dimethylated at one site by host PRMT6. Methylation impairs the RNA-binding activity and export of viral RNA from the nucleus to the cytoplasm. Post-translationally, phosphorylated by protein kinase CK2. Presence of, and maybe binding to the N-terminus of the regulatory beta subunit of CK2 is necessary for CK2-mediated Rev's phosphorylation.

The protein resides in the host nucleus. It is found in the host nucleolus. It localises to the host cytoplasm. In terms of biological role, escorts unspliced or incompletely spliced viral pre-mRNAs (late transcripts) out of the nucleus of infected cells. These pre-mRNAs carry a recognition sequence called Rev responsive element (RRE) located in the env gene, that is not present in fully spliced viral mRNAs (early transcripts). This function is essential since most viral proteins are translated from unspliced or partially spliced pre-mRNAs which cannot exit the nucleus by the pathway used by fully processed cellular mRNAs. Rev itself is translated from a fully spliced mRNA that readily exits the nucleus. Rev's nuclear localization signal (NLS) binds directly to KPNB1/Importin beta-1 without previous binding to KPNA1/Importin alpha-1. KPNB1 binds to the GDP bound form of RAN (Ran-GDP) and targets Rev to the nucleus. In the nucleus, the conversion from Ran-GDP to Ran-GTP dissociates Rev from KPNB1 and allows Rev's binding to the RRE in viral pre-mRNAs. Rev multimerization on the RRE via cooperative assembly exposes its nuclear export signal (NES) to the surface. Rev can then form a complex with XPO1/CRM1 and Ran-GTP, leading to nuclear export of the complex. Conversion from Ran-GTP to Ran-GDP mediates dissociation of the Rev/RRE/XPO1/RAN complex, so that Rev can return to the nucleus for a subsequent round of export. Beside KPNB1, also seems to interact with TNPO1/Transportin-1, RANBP5/IPO5 and IPO7/RANBP7 for nuclear import. The nucleoporin-like HRB/RIP is an essential cofactor that probably indirectly interacts with Rev to release HIV RNAs from the perinuclear region to the cytoplasm. The polypeptide is Protein Rev (Human immunodeficiency virus type 1 group M subtype B (strain 89.6) (HIV-1)).